Reading from the N-terminus, the 1138-residue chain is Serine/threonine/tyrosine-interacting-like protein 2 (1138 aa).

Residues 1 to 20 (MATGGDAEEEQVVPNEEDEA) form a disordered region. In terms of domain architecture, Tyrosine-protein phosphatase spans 132-280 (NEVDEVWPNV…LRELNEKLME (149 aa)). Phosphoserine is present on Ser-291. Disordered regions lie at residues 309-336 (EEED…VTLI), 348-473 (EWRK…TWDM), 486-515 (ARKY…DDEE), 552-575 (KKDS…GEKN), 592-618 (QKKV…AKKR), 660-694 (AAPS…LPNL), 761-800 (SGCL…VRGT), and 850-1117 (FKKK…DEAI). The segment covering 316-331 (SHLSGSSLGKASQVSK) has biased composition (polar residues). Position 373 is a phosphoserine (Ser-373). Positions 376-385 (DGDDCEDEDV) are enriched in acidic residues. A compositionally biased stretch (basic and acidic residues) spans 386–409 (ERIIQEWQSRNERYQAKGREQWNR). Thr-427 is subject to Phosphothreonine. 2 positions are modified to phosphoserine: Ser-503 and Ser-555. Basic and acidic residues-rich tracts occupy residues 552–567 (KKDS…HGTE) and 595–614 (VGSE…DTVL). Polar residues predominate over residues 672–687 (SVLSTQSHRSHASNMP). A compositionally biased stretch (low complexity) spans 773–788 (SSDVQSVLSSTSSLTS). Over residues 858 to 871 (DEDMSVGDRDEDTD) the composition is skewed to acidic residues. A Phosphoserine modification is found at Ser-862. The segment covering 878–897 (RYSSRSNSQKPETDASSSLA) has biased composition (polar residues). At Ser-929 the chain carries Phosphoserine. Over residues 936 to 947 (SGSSRGRYTRSS) the composition is skewed to low complexity. Over residues 965-977 (RSQEQDTSFHEAN) the composition is skewed to basic and acidic residues. Ser-966 is subject to Phosphoserine. The segment covering 980–992 (TVRNTSRFSSSTT) has biased composition (polar residues). Residue Ser-1016 is modified to Phosphoserine. Basic and acidic residues-rich tracts occupy residues 1035-1059 (PEPR…KSDF) and 1074-1091 (RSEE…EEGR). Polar residues predominate over residues 1095 to 1106 (GRQSQYRRSTNQ). Residues 1107–1116 (QEEEEMDDEA) show a composition bias toward acidic residues.

The protein belongs to the protein-tyrosine phosphatase family. Non-receptor class dual specificity subfamily.

It localises to the cytoplasm. It is found in the myofibril. Its subcellular location is the sarcomere. Functionally, may be required for myofiber maturation. This Mus musculus (Mouse) protein is Serine/threonine/tyrosine-interacting-like protein 2 (Styxl2).